The chain runs to 379 residues: SUN domain-containing protein 5 (379 aa).

The segment at 1 to 45 is disordered; that stretch reads MPRSSRSPGDPGALLEDVAHNPRPRRIAQRGRNTSRMAEDTSPNM. Residues 1 to 105 lie on the Nuclear side of the membrane; it reads MPRSSRSPGD…LLCQKLMEKT (105 aa). Positions 31–45 are enriched in polar residues; that stretch reads GRNTSRMAEDTSPNM. Residues 106 to 122 form a helical membrane-spanning segment; it reads GILLLCAFGFWMFSIHL. The Perinuclear space portion of the chain corresponds to 123 to 379; the sequence is PSKMKVWQDD…PHQNPYPKRD (257 aa). Positions 141–182 form a coiled coil; sequence LRLYQEKVRHHSGEIQDLRGSMNQLIAKLQEMEAMSDEQKMA. Residues 205–364 form the SUN domain; that stretch reads GASIDFEHTS…YRVRVHGSVA (160 aa).

Probable homotrimer. Interacts with DNAJB13. Highly glycosylated in the Golgi apparatus during spermiogenesis. Sperm (at protein level). Widely expressed. Conflictingly shown to be specifically expressed in testis.

The protein localises to the nucleus inner membrane. The protein resides in the golgi apparatus. Its function is as follows. Plays an essential role in anchoring sperm head to the tail. Is responsible for the attachment of the coupling apparatus to the sperm nuclear envelope. This Homo sapiens (Human) protein is SUN domain-containing protein 5 (SUN5).